Consider the following 217-residue polypeptide: MPKKFQGENSKSAAARARRAEAKAAADAKKQKELEDAYWKDEDKHVMRKEQRKEEKEKRRLEQLERKKETQRLLEEEDSRLKGGKAPRVAPAKVTRAQIEDSLRREQRAEPVEKAKSHLELPLEENLNRRLQEEGSVEARTVEDAIAVLSVAEEADRHPERRMRAAFTAFEEVQLPRLKQENPNMRLSQLKQLLKKEWLRSPDNPMNQRALPFNAPK.

Positions 1 to 120 (MPKKFQGENS…PVEKAKSHLE (120 aa)) are disordered. Residues 15–82 (ARARRAEAKA…LLEEEDSRLK (68 aa)) are a coiled coil. 2 stretches are compositionally biased toward basic and acidic residues: residues 18 to 74 (RRAE…QRLL) and 98 to 120 (QIEDSLRREQRAEPVEKAKSHLE). Residues Ser136 and Ser188 each carry the phosphoserine modification.

This sequence belongs to the CCDC124 family. In terms of assembly, associates with translationally inactive ribosomes in the nonrotated state. Interacts with RASGEF1B.

The protein resides in the cytoplasm. Its subcellular location is the cytoskeleton. The protein localises to the microtubule organizing center. It is found in the centrosome. It localises to the midbody. Its function is as follows. Ribosome-binding protein involved in ribosome hibernation: associates with translationally inactive ribosomes and stabilizes the nonrotated conformation of the 80S ribosome, thereby promoting ribosome preservation and storage. Also required for proper progression of late cytokinetic stages. The protein is Coiled-coil domain-containing protein 124 (Ccdc124) of Mus musculus (Mouse).